Here is a 217-residue protein sequence, read N- to C-terminus: Eukaryotic translation initiation factor 4E (217 aa).

The disordered stretch occupies residues 1 to 27; the sequence is MATVEPETTPTPNPPPTEEEKTESNQE. Residue Ala-2 is modified to N-acetylalanine. At Thr-22 the chain carries Phosphothreonine. The interval 37–40 is EIF4EBP1/2/3 binding; that stretch reads HPLQ. Residue 56–57 participates in mRNA binding; that stretch reads WQ. The interval 73-77 is EIF4EBP1/2/3 binding; it reads WALYN. Residue 102 to 103 participates in mRNA binding; sequence WE. Residues 132–139 are EIF4EBP1/2/3 binding; the sequence is ETVLCLIG. MRNA is bound by residues 157-162 and 205-207; these read RAKGDK and TKS. Phosphoserine; by PKC and MKNK2 is present on Ser-209.

The protein belongs to the eukaryotic initiation factor 4E family. EIF4F is a multi-subunit complex, the composition of which varies with external and internal environmental conditions. It is composed of at least EIF4A, EIF4E and EIF4G1/EIF4G3. EIF4E is also known to interact with other partners. Interacts with EIF4ENIF1/4E-T; promotes recruitment to P-bodies and import into the nucleus. Hypophosphorylated EIF4EBP1, EIF4EBP2 and EIF4EBP3 compete with EIF4G1/EIF4G3 to interact with EIF4E; insulin stimulated MAP-kinase (MAPK1 and MAPK3) phosphorylation of EIF4EBP1 causes dissociation of the complex allowing EIF4G1/EIF4G3 to bind and consequent initiation of translation. Interacts mutually exclusive with EIF4A1 or EIF4A2. Interacts with NGDN and PIWIL2. Component of the CYFIP1-EIF4E-FMR1 complex composed of CYFIP, EIF4E and FMR1. Interacts directly with CYFIP1. Interacts with CLOCK. Binds to MKNK2 in nucleus. Interacts with LIMD1, WTIP and AJUBA. Interacts with APOBEC3G in an RNA-dependent manner. Interacts with LARP1. Interacts with METTL3. Interacts with RBM24; this interaction prevents EIF4E from binding to p53/TP53 mRNA and inhibits the assembly of translation initiation complex. Interacts with DDX3X; interaction is direct and in an RNA-independent manner; this interaction enhances EIF4E cap-binding ability and is required for the repression of cap-dependent translation and the increase of IRES-mediated translation. DDX3X competes with EIF4G1 for interaction with EIF4E. Interacts with EIF4G1; which in a mutual exclusive interaction associates either with EIF1 or with EIF4E on a common binding site. Interacts with BTG4 and CNOT7. Interacts with LRPPRC (via N-terminus); the interaction promotes association of EIF4E with 4ESE-containing mRNAs. Interacts with mRNA cleavage enzyme CPSF3 and its cofactor CPSF1. Interacts (via RING-type zinc finger) with PML; the interaction results in conformational changes of both interacting proteins and reduces EIF4E affinity for the 5' m7G cap of mRNA, thus reducing EIF4E-mediated mRNA nuclear export. Interacts with homeobox protein HHEX/PRH; the interaction inhibits EIF4E-mediated mRNA nuclear export. Interacts with homeobox protein HOXA9; the interaction positively regulates EIF4E-mediated mRNA nuclear export. Interacts with homeobox protein EMX2. Phosphorylation increases the ability of the protein to bind to mRNA caps and to form the eIF4F complex. Phosphorylation also enhances its mRNA transport function. Phosphorylation at Ser-209 is not essential for protein synthesis.

The protein resides in the cytoplasm. It localises to the P-body. It is found in the stress granule. Its subcellular location is the nucleus. The protein localises to the nucleus speckle. The protein resides in the nuclear body. Acts in the cytoplasm to initiate and regulate protein synthesis and is required in the nucleus for export of a subset of mRNAs from the nucleus to the cytoplasm which promotes processes such as RNA capping, processing and splicing. Component of the protein complex eIF4F, which is involved in the recognition of the mRNA cap, ATP-dependent unwinding of 5'-terminal secondary structure and recruitment of mRNA to the ribosome. This protein recognizes and binds the 7-methylguanosine (m7G)-containing mRNA cap during an early step in the initiation of protein synthesis and facilitates ribosome binding by inducing the unwinding of the mRNAs secondary structures. Together with EIF4G1, antagonizes the scanning promoted by EIF1-EIF4G1 and is required for TISU translation, a process where the TISU element recognition makes scanning unnecessary. In addition to its role in translation initiation, also acts as a regulator of translation and stability in the cytoplasm. Component of the CYFIP1-EIF4E-FMR1 complex which binds to the mRNA cap and mediates translational repression: in the complex, EIF4E mediates the binding to the mRNA cap. Component of a multiprotein complex that sequesters and represses translation of proneurogenic factors during neurogenesis. In P-bodies, component of a complex that mediates the storage of translationally inactive mRNAs in the cytoplasm and prevents their degradation. May play an important role in spermatogenesis through translational regulation of stage-specific mRNAs during germ cell development. As well as its roles in translation, also involved in mRNA nucleocytoplasmic transport. Its role in mRNA export from the nucleus to the cytoplasm relies on its ability to bind the m7G cap of RNAs and on the presence of the 50-nucleotide EIF4E sensitivity element (4ESE) in the 3'UTR of sensitive transcripts. Interaction with the 4ESE is mediated by LRPPRC which binds simultaneously to both EIF4E and the 4ESE, thereby acting as a platform for assembly for the RNA export complex. EIF4E-dependent mRNA export is independent of ongoing protein or RNA synthesis and is also NFX1-independent but is XPO1-dependent with LRPPRC interacting with XPO1 to form an EIF4E-dependent mRNA export complex. Alters the composition of the cytoplasmic face of the nuclear pore to promote RNA export by reducing RANBP2 expression, relocalizing nucleoporin NUP214 and increasing expression of RANBP1 and RNA export factors DDX19 and GLE1. Promotes the nuclear export of cyclin CCND1 mRNA. Promotes the nuclear export of NOS2/iNOS mRNA. Promotes the nuclear export of MDM2 mRNA. Also promotes the export of additional mRNAs, including others involved in the cell cycle. In the nucleus, binds to capped splice factor-encoding mRNAs and stimulates their nuclear export to enhance splice factor production by increasing their cytoplasmic availability to the translation machinery. May also regulate splicing through interaction with the spliceosome in an RNA and m7G cap-dependent manner. Also binds to some pre-mRNAs and may play a role in their recruitment to the spliceosome. Promotes steady-state capping of a subset of coding and non-coding RNAs by mediating nuclear export of capping machinery mRNAs including RNMT, RNGTT and RAMAC to enhance their translation. Stimulates mRNA 3'-end processing by promoting the expression of several core cleavage complex factors required for mRNA cleavage and polyadenylation, and may also have a direct effect through its interaction with the CPSF3 cleavage enzyme. Rescues cells from apoptosis by promoting activation of serine/threonine-protein kinase AKT1 through mRNA export of NBS1 which potentiates AKT1 phosphorylation and also through mRNA export of AKT1 effectors, allowing for increased production of these proteins. The sequence is that of Eukaryotic translation initiation factor 4E (EIF4E) from Bos taurus (Bovine).